Here is a 183-residue protein sequence, read N- to C-terminus: MDIDPYKEFGATVELLSFLPSDFFPSVRDLLDTAAALYRDALESPEHCSPHHTALRQAILCWGDLITLSTWVGTNLEDPASRDLVVSYVNSNMGLKFRQLLWFHISCLTFGRETVLEYLVSFGVWIRTPPAYRPPNAPILSTLPETTVVRRRGRSPRRRTPSPRRRRSQSPRRRRSQSRESQC.

A disordered region spans residues 136–183 (NAPILSTLPETTVVRRRGRSPRRRTPSPRRRRSQSPRRRRSQSRESQC). Basic residues predominate over residues 149-176 (VRRRGRSPRRRTPSPRRRRSQSPRRRRS). Phosphoserine; by host occurs at positions 155, 162, and 170. One copy of the 1; half-length repeat lies at 155-161 (SPRRRTP). Residues 155–177 (SPRRRTPSPRRRRSQSPRRRRSQ) are 3 X 8 AA repeats of S-P-R-R-R-[PR]-S-Q. The short motif at 158–175 (RRTPSPRRRRSQSPRRRR) is the Bipartite nuclear localization signal element. 2 repeat units span residues 162 to 169 (SPRRRRSQ) and 170 to 177 (SPRRRRSQ). The segment at 177–183 (QSRESQC) is RNA binding.

This sequence belongs to the orthohepadnavirus core antigen family. Homodimerizes, then multimerizes. Interacts with cytosol exposed regions of viral L glycoprotein present in the reticulum-to-Golgi compartment. Interacts with human FLNB. Phosphorylated form interacts with host importin alpha; this interaction depends on the exposure of the NLS, which itself depends upon genome maturation and/or phosphorylation of the capsid protein. Interacts with host NUP153. Phosphorylated by host SRPK1, SRPK2, and maybe protein kinase C or GAPDH. Phosphorylation is critical for pregenomic RNA packaging. Protein kinase C phosphorylation is stimulated by HBx protein and may play a role in transport of the viral genome to the nucleus at the late step during the viral replication cycle.

The protein localises to the virion. The protein resides in the host cytoplasm. In terms of biological role, self assembles to form an icosahedral capsid. Most capsids appear to be large particles with an icosahedral symmetry of T=4 and consist of 240 copies of capsid protein, though a fraction forms smaller T=3 particles consisting of 180 capsid proteins. Entering capsids are transported along microtubules to the nucleus. Phosphorylation of the capsid is thought to induce exposure of nuclear localization signal in the C-terminal portion of the capsid protein that allows binding to the nuclear pore complex via the importin (karyopherin-) alpha and beta. Capsids are imported in intact form through the nuclear pore into the nuclear basket, where it probably binds NUP153. Only capsids that contain the mature viral genome can release the viral DNA and capsid protein into the nucleoplasm. Immature capsids get stuck in the basket. Capsids encapsulate the pre-genomic RNA and the P protein. Pre-genomic RNA is reverse-transcribed into DNA while the capsid is still in the cytoplasm. The capsid can then either be directed to the nucleus, providing more genomes for transcription, or bud through the endoplasmic reticulum to provide new virions. This Homo sapiens (Human) protein is Capsid protein.